The sequence spans 507 residues: uncharacterized protein (507 aa).

A run of 12 helical transmembrane segments spans residues 11-31 (ILCFFLWQFGLFYACQLIFPI), 97-117 (AWIATIQFIGALVGALVYGHL), 125-145 (PVSFVGISIGIIFGVASGFAP), 149-169 (VFAVLLFICGTSVACIMIVFY), 187-207 (FFNWGYARLVFTLVCFICGYW), 209-229 (SAAIATSLLALPILPVLLWLP), 283-303 (LFSSWPIAYSTIVVGSLWFST), 326-346 (FVQAAAIALSKLSIFLLDLFI), 354-374 (LHQVPQIIMIACYTTIMALMI), 388-408 (LAIIIINIIGTSFIELTWDAC), 423-443 (IGIGTCSLLARIGALLAPQMA), and 452-472 (IPYIIVCSIGIISLLISCFFL).

This sequence belongs to the major facilitator superfamily.

It is found in the membrane. This is an uncharacterized protein from Caenorhabditis elegans.